The following is a 581-amino-acid chain: Ketol-acid reductoisomerase, chloroplastic (581 aa).

A chloroplast-targeting transit peptide spans 1 to 50; sequence MAAVTSSCSTAISASSKTLAKPVAASFAPTNLSFSKLSPQSIRARRSITV. The region spanning 92 to 290 is the KARI N-terminal Rossmann domain; sequence VRGGRDLFHL…ALGSPFTFAT (199 aa). Residues 113-120, 146-151, and 185-189 contribute to the NADP(+) site; these read GVIGWGSQ, RKGSSS, and SDSAQ. The active site involves histidine 210. KARI C-terminal knotted domains follow at residues 291–439 and 440–576; these read TLEQ…RPAG and DLGP…RPEL. Aspartate 299, glutamate 303, glutamate 476, and glutamate 480 together coordinate Mg(2+). Serine 502 is a substrate binding site.

It belongs to the ketol-acid reductoisomerase family. In terms of assembly, homodimer. Mg(2+) is required as a cofactor.

Its subcellular location is the plastid. It is found in the chloroplast. It carries out the reaction (2R)-2,3-dihydroxy-3-methylbutanoate + NADP(+) = (2S)-2-acetolactate + NADPH + H(+). The enzyme catalyses (2R,3R)-2,3-dihydroxy-3-methylpentanoate + NADP(+) = (S)-2-ethyl-2-hydroxy-3-oxobutanoate + NADPH + H(+). It participates in amino-acid biosynthesis; L-isoleucine biosynthesis; L-isoleucine from 2-oxobutanoate: step 2/4. It functions in the pathway amino-acid biosynthesis; L-valine biosynthesis; L-valine from pyruvate: step 2/4. In Pisum sativum (Garden pea), this protein is Ketol-acid reductoisomerase, chloroplastic (PGAAIR).